The sequence spans 548 residues: 5-epi-aristolochene synthase (548 aa).

Positions 264, 301, 305, 441, and 444 each coordinate (2E,6E)-farnesyl diphosphate. Mg(2+) contacts are provided by Asp301 and Asp305. Positions 301-305 (DDTFD) match the DDXXD motif motif. Mg(2+) contacts are provided by Asp444, Asp445, Thr448, and Glu452.

This sequence belongs to the terpene synthase family. Monomer. The cofactor is Mg(2+). Post-translationally, self-alkylated at Tyr-520 in the presence of (2Z,6E)-farnesyl diphosphate ((Z,E)-FPP). Self-alkylated at Asp-444 at warm temperature (42 degrees Celsius) in the presence of (2E,6E)-farnesyl diphosphate ((E,E)-FPP).

It localises to the cytoplasm. It carries out the reaction (2E,6E)-farnesyl diphosphate = (+)-5-epi-aristolochene + diphosphate. The enzyme catalyses (2Z,6E)-farnesyl diphosphate = (+)-2-epi-prezizaene + diphosphate. The catalysed reaction is (2Z,6E)-farnesyl diphosphate = (-)-alpha-cedrene + diphosphate. It catalyses the reaction (2Z,6E)-farnesyl diphosphate = (-)-beta-curcumene + diphosphate. It functions in the pathway secondary metabolite biosynthesis; terpenoid biosynthesis. Inhibited activity toward farnesyl diphosphate (FPP) by anilinogeranyl diphosphate (AGPP); AGPP undergoes a cyclization event leading to the formation of a novel macrocyclic paracyclophane alkaloid. Repressed by sesquilavandulyl diphosphate (SPP) via the induction of self-alkyation. Catalyzes the cyclization of trans,trans-farnesyl diphosphate (FPP) to the bicyclic intermediate 5-epi-aristolochene, initial step in the conversion of FPP to the sesquiterpenoid antifungal phytoalexin capsidiol. Produces germacrene A as an enzyme-bound intermediate that is not released by the enzyme, but is further cyclized to produce the bicyclic 5-epi-aristolochene. Mediates, at low levels, the formation of 4-epi-eremophilene and premnaspirodiene from trans,trans-farnesyl diphosphate. Also mediates the conversion of cis,trans-farnesyl diphosphate to cisoid minor products such as (+)-2-epi-prezizaene, (-)-alpha-cedrene and, to a lesser extent, (-)-beta-curcumene; also produces, at low levels, alpha-acoradiene and 4-epi-alpha-acoradiene, but barely nerolidol, alpha-bisabolol, epi-alpha-bisabolol and cis-farnesol. In Nicotiana tabacum (Common tobacco), this protein is 5-epi-aristolochene synthase (EAS3).